The primary structure comprises 605 residues: MTATRHPFASDIDAATRIAEPDFDLLDALVRTDDPDDQAHTLARVVLAAFDNYYAVSRRIPALAQAAFEARDWAATVRLSKIRLGLYTACIDQLVPLLKAGLPELANDEQLWARAEAELLAAIAERYEADFAFAFWQSLRRKLVSDEWRPVSYDTGPAARPKATSAAILKTIATTLPIRPAVIRDILDGAGLRGPWRDRDGDAALAAAAIEAALEPLGPRAGETAKIEIAESGFFRNRGACLVGRVRLRDRGDMPMRNLPLLIALLNEDDGLVVDAVLCDADELQYAFSSTLANYHATNPHYHELARLLHELMPKRPLGTQYSCIGFHHLGKVAVMTEILAEHRRSKEKLDTAPGFKGTVAIAFTMPSSAYVLKIIRDHPTDDYKFDYFDGLDAVLRKYNLVHEIDRAGSMLDNIIYSNVKLERTMFAPDLLDELLESGIDTVTLERGALVFRHLIVQIKLTPLPLYLTTASAADARAAVINLGDCIKNNAAADIFNKDLDGRNYGVSRIRKVYLFDYDAVEPLTDVRVRGDDAPPGPEFEDGVVFRPADMLGGLRIDDPALRRAFRDAHPELMQPEYWQGMQRALRAGKVPRVMNYPAARRLRR.

Residues 353-359 (APGFKGT) and Lys-374 contribute to the ATP site. Asp-413 is an active-site residue.

It belongs to the AceK family.

The protein localises to the cytoplasm. It catalyses the reaction L-seryl-[isocitrate dehydrogenase] + ATP = O-phospho-L-seryl-[isocitrate dehydrogenase] + ADP + H(+). In terms of biological role, bifunctional enzyme which can phosphorylate or dephosphorylate isocitrate dehydrogenase (IDH) on a specific serine residue. This is a regulatory mechanism which enables bacteria to bypass the Krebs cycle via the glyoxylate shunt in response to the source of carbon. When bacteria are grown on glucose, IDH is fully active and unphosphorylated, but when grown on acetate or ethanol, the activity of IDH declines drastically concomitant with its phosphorylation. The protein is Isocitrate dehydrogenase kinase/phosphatase of Rhodopseudomonas palustris (strain HaA2).